Consider the following 179-residue polypeptide: Ribulose bisphosphate carboxylase small subunit, chloroplastic 3 (179 aa).

A chloroplast-targeting transit peptide spans 1-58 (MASSATMLSSVATAARAAPAQASMVAPFVGLKSASAFPVTQKPATGLSTLPSNGGRVQ).

This sequence belongs to the RuBisCO small chain family. Heterohexadecamer of 8 large and 8 small subunits.

It localises to the plastid. The protein localises to the chloroplast. Functionally, ruBisCO catalyzes two reactions: the carboxylation of D-ribulose 1,5-bisphosphate, the primary event in carbon dioxide fixation, as well as the oxidative fragmentation of the pentose substrate. Both reactions occur simultaneously and in competition at the same active site. Although the small subunit is not catalytic it is essential for maximal activity. This is Ribulose bisphosphate carboxylase small subunit, chloroplastic 3 from Fritillaria agrestis (Stinkbells).